A 322-amino-acid chain; its full sequence is Protein-L-isoaspartate O-methyltransferase (322 aa).

The tract at residues 1–101 (MSGERAKRFP…AKQGDRSAAP (101 aa)) is disordered. The segment covering 14–29 (EDLKREPRKPEGRVAE) has biased composition (basic and acidic residues). Low complexity-rich tracts occupy residues 33-51 (AGDA…PAAA) and 76-91 (HAPA…PQGG). The active site involves Ser-170.

This sequence belongs to the methyltransferase superfamily. L-isoaspartyl/D-aspartyl protein methyltransferase family.

Its subcellular location is the cytoplasm. The enzyme catalyses [protein]-L-isoaspartate + S-adenosyl-L-methionine = [protein]-L-isoaspartate alpha-methyl ester + S-adenosyl-L-homocysteine. Functionally, catalyzes the methyl esterification of L-isoaspartyl residues in peptides and proteins that result from spontaneous decomposition of normal L-aspartyl and L-asparaginyl residues. It plays a role in the repair and/or degradation of damaged proteins. The sequence is that of Protein-L-isoaspartate O-methyltransferase from Burkholderia mallei (strain NCTC 10247).